The chain runs to 583 residues: MKELVKEKVLKALKELYNTQVENFKVEKPKEEAHGDLASNVAFLLARELKKPPVNIAQELADFLSKDETFKSVEAVKGFINFRFSEDFLKEEFKKFLLSGEAYFKEDLGKGLKVQLEYVSANPTGPLHLGHGRGAVVGDTLARLFKFFNYDVTREYYINDAGRQVYLLGISIYYRYLEKCPERDEETFKEIKEIFEKDGYRGEYVKEIAERLRKLVGESLCKPEEANLKEVREKILKEESIELYYTKKYEPKDVVDLLSNYGLDLMMKEIREDLSLMDISFDVWFSERSLYDSGEVERLINLLKEKGYVYEKDGALWLKTSLFGDDKDRVVKRSDGTYTYFASDIAYHYNKFKRGFEKVINVWGADHHGYIPRVKAALKMLEIPEDWLEILLVQMVKLFREGKEVKMSKRAGTFVTLRELLDEVGKDAVRFIFLTKRSDTPLDFDVEKAKEKSSENPVYYVQYAHARISGIFREFKERYKKDVSVEELINYVQHLEEEAEIKLIKKVLFFKDELVDITLKREPHLLTYYLIDLAGDFHHYYNHHRILGMEENVMFSRLALVKGIKEVVRLGLNLMGVSAPERM.

The short motif at 121 to 131 is the 'HIGH' region element; the sequence is ANPTGPLHLGH.

It belongs to the class-I aminoacyl-tRNA synthetase family. Monomer.

The protein localises to the cytoplasm. The catalysed reaction is tRNA(Arg) + L-arginine + ATP = L-arginyl-tRNA(Arg) + AMP + diphosphate. The chain is Arginine--tRNA ligase (argS) from Aquifex aeolicus (strain VF5).